The primary structure comprises 300 residues: Meiotically up-regulated gene 165 protein (300 aa).

2 disordered regions span residues 1–38 and 50–109; these read MLEK…HKPS and TNSS…STLE. Over residues 21 to 38 the composition is skewed to polar residues; sequence ESHTFSSQTDDSYFHKPS. A compositionally biased stretch (low complexity) spans 52-69; it reads SSVPSASRSPESIASSQS. Residues 94-103 are compositionally biased toward basic residues; sequence TLRKRGRKPK.

The protein resides in the nucleus. Has a role in meiosis. This Schizosaccharomyces pombe (strain 972 / ATCC 24843) (Fission yeast) protein is Meiotically up-regulated gene 165 protein (mug165).